The following is a 438-amino-acid chain: sn-glycerol-3-phosphate-binding periplasmic protein UgpB (438 aa).

The N-terminal stretch at 1 to 23 (MKPLHYTASALALGLALMGNAQA) is a signal peptide. Sn-glycerol 3-phosphate is bound by residues tyrosine 65, glutamate 89, serine 144, serine 270, glycine 307, tyrosine 346, and arginine 397.

This sequence belongs to the bacterial solute-binding protein 1 family. The complex is composed of two ATP-binding proteins (UgpC), two transmembrane proteins (UgpA and UgpE) and a solute-binding protein (UgpB).

It localises to the periplasm. In terms of biological role, part of the ABC transporter complex UgpBAEC involved in sn-glycerol-3-phosphate (G3P) import. Binds G3P. This Shigella flexneri serotype 5b (strain 8401) protein is sn-glycerol-3-phosphate-binding periplasmic protein UgpB (ugpB).